The sequence spans 411 residues: Prophage integrase IntR (411 aa).

Residues 81–176 enclose the Core-binding (CB) domain; sequence KTFGELCDIW…LLCSLLRFAY (96 aa). The region spanning 197–404 is the Tyr recombinase domain; it reads IKPDPLSKTE…IDDMNDEQIA (208 aa). Active-site residues include Arg-231, Lys-266, Arg-358, and His-381. The active-site O-(3'-phospho-DNA)-tyrosine intermediate is the Tyr-391.

It belongs to the 'phage' integrase family.

In terms of biological role, integrase is necessary for integration of the phage into the host genome by site-specific recombination. In conjunction with excisionase, integrase is also necessary for excision of the prophage from the host genome. The chain is Prophage integrase IntR (intR) from Escherichia coli (strain K12).